The following is a 1424-amino-acid chain: Putative disease resistance protein At3g14460 (1424 aa).

The NB-ARC domain maps to 152-454 (WRQASRSRPD…AIDLLYQPRS (303 aa)). Position 200 to 207 (200 to 207 (GMPGVGKT)) interacts with ATP. LRR repeat units follow at residues 498 to 523 (VSGD…HFSF), 552 to 571 (PTSL…LLNA), 572 to 595 (LSGL…LKGL), 597 to 618 (LLRY…VCTL), 620 to 641 (NLQT…SIAE), 642 to 665 (LINL…IKKL), and 806 to 830 (LPSL…FFFG). Disordered regions lie at residues 911-977 (FRRS…PKDR) and 1050-1070 (IKSS…QYDD). Composition is skewed to polar residues over residues 912–927 (RRSL…SIPS) and 934–972 (SSPT…SLSS). LRR repeat units follow at residues 1090-1114 (PQNL…LTES), 1118-1139 (LHEL…HPPT), 1238-1262 (TPKL…LFGL), 1264-1286 (SLLS…GFPS), and 1310-1336 (LENL…LLPK).

This sequence belongs to the disease resistance NB-LRR family.

Functionally, potential disease resistance protein. The polypeptide is Putative disease resistance protein At3g14460 (Arabidopsis thaliana (Mouse-ear cress)).